A 339-amino-acid chain; its full sequence is HTH-type transcriptional regulator PtxS (339 aa).

Residues 12–67 enclose the HTH lacI-type domain; that stretch reads VTISEVARVAGVSKATVSRYIGGDRQLLAEATAKRLEEVIERLGYRPNQMARGLKR. The segment at residues 14–33 is a DNA-binding region (H-T-H motif); sequence ISEVARVAGVSKATVSRYIG.

In terms of assembly, homodimer in solution.

With respect to regulation, 2-ketogluconate acts as a molecular effector and causes dissociation of PtxS from its target promoter. In terms of biological role, negatively regulates glucose metabolism by binding directly to the promoter region of the kgu and gad operons. It also negatively regulates its own synthesis. This is HTH-type transcriptional regulator PtxS from Pseudomonas putida (strain ATCC 47054 / DSM 6125 / CFBP 8728 / NCIMB 11950 / KT2440).